We begin with the raw amino-acid sequence, 297 residues long: Acetyl-coenzyme A carboxylase carboxyl transferase subunit beta (297 aa).

A disordered region spans residues 1 to 23; that stretch reads MSWIERILGRTSSSSSSSKSKVP. The CoA carboxyltransferase N-terminal domain maps to 26 to 295; it reads VWTKCTSCEQ…PFKTAELIVE (270 aa). Cys-30, Cys-33, Cys-49, and Cys-52 together coordinate Zn(2+). The C4-type zinc-finger motif lies at 30–52; the sequence is CTSCEQVLYSEELKRNMHVCPKC.

The protein belongs to the AccD/PCCB family. Acetyl-CoA carboxylase is a heterohexamer composed of biotin carboxyl carrier protein (AccB), biotin carboxylase (AccC) and two subunits each of ACCase subunit alpha (AccA) and ACCase subunit beta (AccD). Zn(2+) serves as cofactor.

Its subcellular location is the cytoplasm. The enzyme catalyses N(6)-carboxybiotinyl-L-lysyl-[protein] + acetyl-CoA = N(6)-biotinyl-L-lysyl-[protein] + malonyl-CoA. The protein operates within lipid metabolism; malonyl-CoA biosynthesis; malonyl-CoA from acetyl-CoA: step 1/1. In terms of biological role, component of the acetyl coenzyme A carboxylase (ACC) complex. Biotin carboxylase (BC) catalyzes the carboxylation of biotin on its carrier protein (BCCP) and then the CO(2) group is transferred by the transcarboxylase to acetyl-CoA to form malonyl-CoA. This chain is Acetyl-coenzyme A carboxylase carboxyl transferase subunit beta, found in Actinobacillus pleuropneumoniae serotype 7 (strain AP76).